Consider the following 403-residue polypeptide: Tryptophan synthase beta chain (403 aa).

K93 carries the N6-(pyridoxal phosphate)lysine modification.

It belongs to the TrpB family. As to quaternary structure, tetramer of two alpha and two beta chains. It depends on pyridoxal 5'-phosphate as a cofactor.

The enzyme catalyses (1S,2R)-1-C-(indol-3-yl)glycerol 3-phosphate + L-serine = D-glyceraldehyde 3-phosphate + L-tryptophan + H2O. The protein operates within amino-acid biosynthesis; L-tryptophan biosynthesis; L-tryptophan from chorismate: step 5/5. In terms of biological role, the beta subunit is responsible for the synthesis of L-tryptophan from indole and L-serine. The chain is Tryptophan synthase beta chain from Acinetobacter baylyi (strain ATCC 33305 / BD413 / ADP1).